The chain runs to 433 residues: Serine--tRNA ligase (433 aa).

Residue 236–238 (TAE) participates in L-serine binding. 267 to 269 (RSE) serves as a coordination point for ATP. E290 contacts L-serine. 354 to 357 (EISS) lines the ATP pocket. L-serine is bound at residue S394.

Belongs to the class-II aminoacyl-tRNA synthetase family. Type-1 seryl-tRNA synthetase subfamily. In terms of assembly, homodimer. The tRNA molecule binds across the dimer.

Its subcellular location is the cytoplasm. It carries out the reaction tRNA(Ser) + L-serine + ATP = L-seryl-tRNA(Ser) + AMP + diphosphate + H(+). The enzyme catalyses tRNA(Sec) + L-serine + ATP = L-seryl-tRNA(Sec) + AMP + diphosphate + H(+). The protein operates within aminoacyl-tRNA biosynthesis; selenocysteinyl-tRNA(Sec) biosynthesis; L-seryl-tRNA(Sec) from L-serine and tRNA(Sec): step 1/1. Functionally, catalyzes the attachment of serine to tRNA(Ser). Is also able to aminoacylate tRNA(Sec) with serine, to form the misacylated tRNA L-seryl-tRNA(Sec), which will be further converted into selenocysteinyl-tRNA(Sec). This is Serine--tRNA ligase from Acidiphilium cryptum (strain JF-5).